Consider the following 252-residue polypeptide: Imidazole glycerol phosphate synthase subunit HisF (252 aa).

Active-site residues include aspartate 11 and aspartate 130.

It belongs to the HisA/HisF family. In terms of assembly, heterodimer of HisH and HisF.

It is found in the cytoplasm. It catalyses the reaction 5-[(5-phospho-1-deoxy-D-ribulos-1-ylimino)methylamino]-1-(5-phospho-beta-D-ribosyl)imidazole-4-carboxamide + L-glutamine = D-erythro-1-(imidazol-4-yl)glycerol 3-phosphate + 5-amino-1-(5-phospho-beta-D-ribosyl)imidazole-4-carboxamide + L-glutamate + H(+). The protein operates within amino-acid biosynthesis; L-histidine biosynthesis; L-histidine from 5-phospho-alpha-D-ribose 1-diphosphate: step 5/9. Functionally, IGPS catalyzes the conversion of PRFAR and glutamine to IGP, AICAR and glutamate. The HisF subunit catalyzes the cyclization activity that produces IGP and AICAR from PRFAR using the ammonia provided by the HisH subunit. This chain is Imidazole glycerol phosphate synthase subunit HisF, found in Bacillus velezensis (strain DSM 23117 / BGSC 10A6 / LMG 26770 / FZB42) (Bacillus amyloliquefaciens subsp. plantarum).